A 109-amino-acid polypeptide reads, in one-letter code: Nucleoid-associated protein Plut_1285 (109 aa).

The protein belongs to the YbaB/EbfC family. Homodimer.

Its subcellular location is the cytoplasm. The protein resides in the nucleoid. Binds to DNA and alters its conformation. May be involved in regulation of gene expression, nucleoid organization and DNA protection. This Chlorobium luteolum (strain DSM 273 / BCRC 81028 / 2530) (Pelodictyon luteolum) protein is Nucleoid-associated protein Plut_1285.